The sequence spans 322 residues: Lipoyl synthase (322 aa).

Polar residues predominate over residues 1 to 14 (MKTLDENQAPSRQT). Residues 1–30 (MKTLDENQAPSRQTPESHRRGAEKLSRIPV) are disordered. The segment covering 15-26 (PESHRRGAEKLS) has biased composition (basic and acidic residues). Cys70, Cys75, Cys81, Cys96, Cys100, Cys103, and Ser310 together coordinate [4Fe-4S] cluster. The region spanning 82-299 (FGHGTATFMI…AGYARELGFA (218 aa)) is the Radical SAM core domain.

This sequence belongs to the radical SAM superfamily. Lipoyl synthase family. Requires [4Fe-4S] cluster as cofactor.

Its subcellular location is the cytoplasm. The catalysed reaction is [[Fe-S] cluster scaffold protein carrying a second [4Fe-4S](2+) cluster] + N(6)-octanoyl-L-lysyl-[protein] + 2 oxidized [2Fe-2S]-[ferredoxin] + 2 S-adenosyl-L-methionine + 4 H(+) = [[Fe-S] cluster scaffold protein] + N(6)-[(R)-dihydrolipoyl]-L-lysyl-[protein] + 4 Fe(3+) + 2 hydrogen sulfide + 2 5'-deoxyadenosine + 2 L-methionine + 2 reduced [2Fe-2S]-[ferredoxin]. It functions in the pathway protein modification; protein lipoylation via endogenous pathway; protein N(6)-(lipoyl)lysine from octanoyl-[acyl-carrier-protein]: step 2/2. Its function is as follows. Catalyzes the radical-mediated insertion of two sulfur atoms into the C-6 and C-8 positions of the octanoyl moiety bound to the lipoyl domains of lipoate-dependent enzymes, thereby converting the octanoylated domains into lipoylated derivatives. The polypeptide is Lipoyl synthase (Methylococcus capsulatus (strain ATCC 33009 / NCIMB 11132 / Bath)).